A 225-amino-acid chain; its full sequence is Urease accessory protein UreE (225 aa).

The segment covering 171 to 215 (HHGHEHSHDHEHGHSHAAHEHSHGHDHTHGHDHDHGDHVHDESCG) has biased composition (basic and acidic residues). The disordered stretch occupies residues 171-225 (HHGHEHSHDHEHGHSHAAHEHSHGHDHTHGHDHDHGDHVHDESCGHGHHHHHAHR). Positions 216–225 (HGHHHHHAHR) are enriched in basic residues.

This sequence belongs to the UreE family.

Its subcellular location is the cytoplasm. Functionally, involved in urease metallocenter assembly. Binds nickel. Probably functions as a nickel donor during metallocenter assembly. This chain is Urease accessory protein UreE, found in Paraburkholderia xenovorans (strain LB400).